The following is a 530-amino-acid chain: RNA-binding protein 39 (530 aa).

Positions 1-146 (MADDIDIEAM…PVREPIDNLT (146 aa)) are disordered. Ala2 is modified (N-acetylalanine). Over residues 14–32 (PYKKDENKLNSANGHEERS) the composition is skewed to basic and acidic residues. 2 stretches are compositionally biased toward basic residues: residues 33-56 (KKRKKSKSRSRSHERKRSKSKERK) and 64-95 (KKSKSRERKRSRSKERRRSRSRSRDRRFRGRY). Residue Tyr95 is modified to Phosphotyrosine. Phosphoserine occurs at positions 97 and 100. A Glycyl lysine isopeptide (Lys-Gly) (interchain with G-Cter in SUMO2) cross-link involves residue Lys111. Ser117 bears the Phosphoserine mark. Residue Lys119 forms a Glycyl lysine isopeptide (Lys-Gly) (interchain with G-Cter in SUMO2) linkage. Over residues 119-130 (KLSRRRSRSKSP) the composition is skewed to basic residues. Ser121 and Ser136 each carry phosphoserine. Over residues 131–146 (FRKDKSPVREPIDNLT) the composition is skewed to basic and acidic residues. Phosphothreonine is present on Thr146. Positions 153-230 (RTVFCMQLAA…VPIIVQASQA (78 aa)) constitute an RRM 1 domain. Residue Lys244 forms a Glycyl lysine isopeptide (Lys-Gly) (interchain with G-Cter in SUMO2) linkage. The RRM 2 domain occupies 250 to 328 (MRLYVGSLHF…RPMKVGHVTE (79 aa)). Positions 291–355 (KGYGFITFSD…RTGIDLGTTG (65 aa)) are activating domain. The tract at residues 291–406 (KGYGFITFSD…IDLQTRLSQQ (116 aa)) is interaction with JUN. A phosphoserine mark is found at Ser334, Ser337, and Ser341. Residues 355–406 (GRLQLMARLAEGTGLQIPPAAQQALQMSGSLAFGAVAEFSFVIDLQTRLSQQ) form an interaction with ESR1 and ESR2 region. The segment at 406–530 (QTEASALAAA…ATQLLVPSRR (125 aa)) is interaction with NCOA6. An RRM 3 domain is found at 445-508 (EIKDDVIEEC…KMITAAYVPL (64 aa)).

This sequence belongs to the splicing factor SR family. Interacts with NCOA6 and JUN. Interacts with ESR1 and ESR2, in the presence of estradiol (E2). Interacts with RSRC1 (via Arg/Ser-rich domain). Interacts with SF3B1. Interacts with ZNF106 (via N-terminus).

It localises to the nucleus. Its function is as follows. RNA-binding protein that acts as a pre-mRNA splicing factor. Acts by promoting exon inclusion via regulation of exon cassette splicing. Also acts as a transcriptional coactivator for steroid nuclear receptors ESR1/ER-alpha and ESR2/ER-beta, and JUN/AP-1, independently of the pre-mRNA splicing factor activity. The chain is RNA-binding protein 39 (Rbm39) from Mus musculus (Mouse).